We begin with the raw amino-acid sequence, 1338 residues long: Aldehyde oxidase (1338 aa).

One can recognise a 2Fe-2S ferredoxin-type domain in the interval 5 to 92; that stretch reads SELLFYVNGR…GAAVTTVEGI (88 aa). Cys-44, Cys-49, Cys-52, and Cys-74 together coordinate [2Fe-2S] cluster. Gln-113 is a binding site for Mo-molybdopterin. Residues Cys-114, Cys-117, Cys-149, and Cys-151 each coordinate [2Fe-2S] cluster. Residue Cys-151 participates in Mo-molybdopterin binding. The FAD-binding PCMH-type domain occupies 236–421; sequence FGSERMMWFS…VSVNIPYSRK (186 aa). Residues 264–271, Ala-345, Ser-354, His-358, Asp-367, and Leu-411 each bind FAD; that span reads VIMGNTSV. Mo-molybdopterin-binding positions include 806–807 and Met-1047; that span reads AF. Position 1068 is a phosphoserine (Ser-1068). Mo-molybdopterin-binding positions include 1088–1091, Gln-1203, and Leu-1268; that span reads GSVV. Catalysis depends on Glu-1270, which acts as the Proton acceptor; for azaheterocycle hydroxylase activity.

Belongs to the xanthine dehydrogenase family. In terms of assembly, homodimer. It depends on [2Fe-2S] cluster as a cofactor. FAD serves as cofactor. The cofactor is Mo-molybdopterin. Abundant in liver, expressed in adipose tissue and at lower levels in lung, skeletal muscle, pancreas. In contrast to mice, no significant gender difference in AOX1 expression level (at protein level).

It localises to the cytoplasm. It carries out the reaction an aldehyde + O2 + H2O = a carboxylate + H2O2 + H(+). The catalysed reaction is retinal + O2 + H2O = retinoate + H2O2 + H(+). With respect to regulation, is very potently inhibited by raloxifene. Also inhibited by estradiol, ethinyl estradiol, hydralazine, menadione, isovanillin and thioridazine. Not inhibited by allopurinol, a xanthine dehydrogenase potent inhibitor. Functionally, oxidase with broad substrate specificity, oxidizing aromatic azaheterocycles, such as N1-methylnicotinamide, N-methylphthalazinium and phthalazine, as well as aldehydes, such as benzaldehyde, retinal, pyridoxal, and vanillin. Plays a key role in the metabolism of xenobiotics and drugs containing aromatic azaheterocyclic substituents. Participates in the bioactivation of prodrugs such as famciclovir, catalyzing the oxidation step from 6-deoxypenciclovir to penciclovir, which is a potent antiviral agent. Is probably involved in the regulation of reactive oxygen species homeostasis. May be a prominent source of superoxide generation via the one-electron reduction of molecular oxygen. May also catalyze nitric oxide (NO) production via the reduction of nitrite to NO with NADH or aldehyde as electron donor. May play a role in adipogenesis. This chain is Aldehyde oxidase, found in Homo sapiens (Human).